The following is a 207-amino-acid chain: Glycerol-3-phosphate acyltransferase (207 aa).

The next 5 membrane-spanning stretches (helical) occupy residues 4–24 (VVAT…SFAV), 58–78 (ILTL…AQWL), 86–106 (ETGI…PVFH), 120–140 (ILLA…LIIA), and 162–182 (VLMN…VLLI).

It belongs to the PlsY family. In terms of assembly, probably interacts with PlsX.

It is found in the cell inner membrane. The catalysed reaction is an acyl phosphate + sn-glycerol 3-phosphate = a 1-acyl-sn-glycero-3-phosphate + phosphate. It participates in lipid metabolism; phospholipid metabolism. Its function is as follows. Catalyzes the transfer of an acyl group from acyl-phosphate (acyl-PO(4)) to glycerol-3-phosphate (G3P) to form lysophosphatidic acid (LPA). This enzyme utilizes acyl-phosphate as fatty acyl donor, but not acyl-CoA or acyl-ACP. This chain is Glycerol-3-phosphate acyltransferase, found in Ralstonia pickettii (strain 12J).